We begin with the raw amino-acid sequence, 132 residues long: Small ribosomal subunit protein uS8 (132 aa).

The protein belongs to the universal ribosomal protein uS8 family. As to quaternary structure, part of the 30S ribosomal subunit. Contacts proteins S5 and S12.

In terms of biological role, one of the primary rRNA binding proteins, it binds directly to 16S rRNA central domain where it helps coordinate assembly of the platform of the 30S subunit. This Paenarthrobacter aurescens (strain TC1) protein is Small ribosomal subunit protein uS8.